The chain runs to 463 residues: NEDD8-activating enzyme E1 catalytic subunit (463 aa).

Residue Ala2 is modified to N-acetylalanine. Positions 53–70 (HPDFEPSTESLQFLLDTC) are interaction with UBE2M N-terminus. ATP is bound by residues 100-124 (DMDTIDVSNLNRQFLFRPKDIGRPK) and 148-171 (IQDFNDTFYRQFHIIVCGLDSIIA). Interaction with UBE2M N-terminus regions lie at residues 157–161 (RQFHI) and 192–217 (PSSIVPLIDGGTEGFKGNARVILPGM). The tract at residues 227 to 229 (LYP) is interaction with NEDD8. The Glycyl thioester intermediate role is filled by Cys237. Interaction with NAE1 stretches follow at residues 242–248 (MPRLPEH) and 292–295 (YNIR). The interaction with UBE2M N-terminus stretch occupies residues 331 to 338 (IATSAYIP). Positions 352–357 (YTYTFE) are interaction with NEDD8. The tract at residues 368–463 (SQLPQNIQFS…TVLFKLHFTS (96 aa)) is interaction with UBE2M core domain.

It belongs to the ubiquitin-activating E1 family. UBA3 subfamily. In terms of assembly, heterodimer of UBA3 and NAE1. Interacts with NEDD8, UBE2F and UBE2M. Binds ESR1 and ESR2 with bound steroid ligand. Interacts with TBATA. In terms of tissue distribution, ubiquitously expressed.

The catalysed reaction is ATP + [NEDD8 protein] + [E1 NEDD8-activating enzyme]-L-cysteine = AMP + diphosphate + [E1 NEDD8-activating enzyme]-S-[NEDD8 protein]-yl-L-cysteine.. Its pathway is protein modification; protein neddylation. Its activity is regulated as follows. Binding of TP53BP2 to the regulatory subunit NAE1 decreases activity. Its function is as follows. Catalytic subunit of the dimeric UBA3-NAE1 E1 enzyme. E1 activates NEDD8 by first adenylating its C-terminal glycine residue with ATP, thereafter linking this residue to the side chain of the catalytic cysteine, yielding a NEDD8-UBA3 thioester and free AMP. E1 finally transfers NEDD8 to the catalytic cysteine of UBE2M. Down-regulates steroid receptor activity. Necessary for cell cycle progression. The polypeptide is NEDD8-activating enzyme E1 catalytic subunit (UBA3) (Homo sapiens (Human)).